Reading from the N-terminus, the 105-residue chain is Met repressor (105 aa).

It belongs to the MetJ family. Homodimer.

It localises to the cytoplasm. Its function is as follows. This regulatory protein, when combined with SAM (S-adenosylmethionine) represses the expression of the methionine regulon and of enzymes involved in SAM synthesis. This is Met repressor from Pectobacterium carotovorum subsp. carotovorum (strain PC1).